Consider the following 330-residue polypeptide: Ketol-acid reductoisomerase (NADP(+)) (330 aa).

The 181-residue stretch at 1-181 (MKVFYDSDFK…GLSRAGVIQT (181 aa)) folds into the KARI N-terminal Rossmann domain. Residues 24 to 27 (YGSQ), arginine 47, serine 52, and 82 to 85 (DELQ) each bind NADP(+). Residue histidine 107 is part of the active site. Glycine 133 serves as a coordination point for NADP(+). The KARI C-terminal knotted domain occupies 182–327 (TFKEETETDL…AKLRKMCGLE (146 aa)). The Mg(2+) site is built by aspartate 190, glutamate 194, glutamate 226, and glutamate 230. Residue serine 251 coordinates substrate.

It belongs to the ketol-acid reductoisomerase family. Mg(2+) serves as cofactor.

The enzyme catalyses (2R)-2,3-dihydroxy-3-methylbutanoate + NADP(+) = (2S)-2-acetolactate + NADPH + H(+). The catalysed reaction is (2R,3R)-2,3-dihydroxy-3-methylpentanoate + NADP(+) = (S)-2-ethyl-2-hydroxy-3-oxobutanoate + NADPH + H(+). The protein operates within amino-acid biosynthesis; L-isoleucine biosynthesis; L-isoleucine from 2-oxobutanoate: step 2/4. It functions in the pathway amino-acid biosynthesis; L-valine biosynthesis; L-valine from pyruvate: step 2/4. Its function is as follows. Involved in the biosynthesis of branched-chain amino acids (BCAA). Catalyzes an alkyl-migration followed by a ketol-acid reduction of (S)-2-acetolactate (S2AL) to yield (R)-2,3-dihydroxy-isovalerate. In the isomerase reaction, S2AL is rearranged via a Mg-dependent methyl migration to produce 3-hydroxy-3-methyl-2-ketobutyrate (HMKB). In the reductase reaction, this 2-ketoacid undergoes a metal-dependent reduction by NADPH to yield (R)-2,3-dihydroxy-isovalerate. In Methanococcus maripaludis (strain C6 / ATCC BAA-1332), this protein is Ketol-acid reductoisomerase (NADP(+)).